The primary structure comprises 95 residues: Sec-independent protein translocase protein TatA (95 aa).

Residues 1-21 form a helical membrane-spanning segment; sequence MFGRLGAPEIILILVVIILLF. The segment covering 44-55 has biased composition (basic and acidic residues); that stretch reads AKAMKSEAKADD. Residues 44-95 are disordered; that stretch reads AKAMKSEAKADDAAPADPPNPEQSAAQRTIQAAPGDVTSSRPVTEPTDTTKR.

This sequence belongs to the TatA/E family. The Tat system comprises two distinct complexes: a TatABC complex, containing multiple copies of TatA, TatB and TatC subunits, and a separate TatA complex, containing only TatA subunits. Substrates initially bind to the TatABC complex, which probably triggers association of the separate TatA complex to form the active translocon.

The protein resides in the cell membrane. Functionally, part of the twin-arginine translocation (Tat) system that transports large folded proteins containing a characteristic twin-arginine motif in their signal peptide across membranes. TatA could form the protein-conducting channel of the Tat system. This is Sec-independent protein translocase protein TatA from Streptomyces coelicolor (strain ATCC BAA-471 / A3(2) / M145).